Consider the following 168-residue polypeptide: Endoribonuclease YbeY (168 aa).

Zn(2+) is bound by residues H128, H132, and H138.

This sequence belongs to the endoribonuclease YbeY family. Zn(2+) is required as a cofactor.

It localises to the cytoplasm. Its function is as follows. Single strand-specific metallo-endoribonuclease involved in late-stage 70S ribosome quality control and in maturation of the 3' terminus of the 16S rRNA. This is Endoribonuclease YbeY from Sphingopyxis alaskensis (strain DSM 13593 / LMG 18877 / RB2256) (Sphingomonas alaskensis).